The chain runs to 300 residues: N-acetylmuramic acid 6-phosphate etherase 2 (300 aa).

Residues 57-220 (ITAAFANGGR…TTGAMIRSGK (164 aa)) form the SIS domain. The active-site Proton donor is the Glu85. The active site involves Glu116.

This sequence belongs to the GCKR-like family. MurNAc-6-P etherase subfamily. In terms of assembly, homodimer.

It catalyses the reaction N-acetyl-D-muramate 6-phosphate + H2O = N-acetyl-D-glucosamine 6-phosphate + (R)-lactate. It participates in amino-sugar metabolism; 1,6-anhydro-N-acetylmuramate degradation. It functions in the pathway amino-sugar metabolism; N-acetylmuramate degradation. Its pathway is cell wall biogenesis; peptidoglycan recycling. Its function is as follows. Specifically catalyzes the cleavage of the D-lactyl ether substituent of MurNAc 6-phosphate, producing GlcNAc 6-phosphate and D-lactate. Together with AnmK, is also required for the utilization of anhydro-N-acetylmuramic acid (anhMurNAc) either imported from the medium or derived from its own cell wall murein, and thus plays a role in cell wall recycling. This is N-acetylmuramic acid 6-phosphate etherase 2 from Vibrio parahaemolyticus serotype O3:K6 (strain RIMD 2210633).